The primary structure comprises 517 residues: GMP synthase [glutamine-hydrolyzing] (517 aa).

The Glutamine amidotransferase type-1 domain maps to 11–202; sequence KIIVLDFGSQ…AFNVCDAKAN (192 aa). Cys88 serves as the catalytic Nucleophile. Catalysis depends on residues His176 and Glu178. The GMPS ATP-PPase domain occupies 203 to 392; that stretch reads WTMDDFIEMQ…LGIPHDLVWR (190 aa). 230-236 is a binding site for ATP; the sequence is SGGVDSS.

In terms of assembly, homodimer.

The enzyme catalyses XMP + L-glutamine + ATP + H2O = GMP + L-glutamate + AMP + diphosphate + 2 H(+). Its pathway is purine metabolism; GMP biosynthesis; GMP from XMP (L-Gln route): step 1/1. Functionally, catalyzes the synthesis of GMP from XMP. This chain is GMP synthase [glutamine-hydrolyzing], found in Lactobacillus gasseri (strain ATCC 33323 / DSM 20243 / BCRC 14619 / CIP 102991 / JCM 1131 / KCTC 3163 / NCIMB 11718 / NCTC 13722 / AM63).